A 212-amino-acid chain; its full sequence is Kynurenine formamidase (212 aa).

A substrate-binding site is contributed by Trp-18. Residues His-48, His-52, and Asp-54 each coordinate Zn(2+). Catalysis depends on His-58, which acts as the Proton donor/acceptor. His-160 and Glu-172 together coordinate Zn(2+).

It belongs to the Cyclase 1 superfamily. KynB family. In terms of assembly, homodimer. It depends on Zn(2+) as a cofactor.

The catalysed reaction is N-formyl-L-kynurenine + H2O = L-kynurenine + formate + H(+). It functions in the pathway amino-acid degradation; L-tryptophan degradation via kynurenine pathway; L-kynurenine from L-tryptophan: step 2/2. Its function is as follows. Catalyzes the hydrolysis of N-formyl-L-kynurenine to L-kynurenine, the second step in the kynurenine pathway of tryptophan degradation. This is Kynurenine formamidase from Paraburkholderia phytofirmans (strain DSM 17436 / LMG 22146 / PsJN) (Burkholderia phytofirmans).